A 622-amino-acid polypeptide reads, in one-letter code: Probable potassium transport system protein Kup (622 aa).

A run of 12 helical transmembrane segments spans residues 8 to 28, 50 to 70, 103 to 123, 137 to 157, 168 to 188, 203 to 223, 247 to 267, 285 to 305, 337 to 357, 366 to 386, 393 to 413, and 419 to 439; these read LAAL…TSVL, ILSI…VVLV, LAVG…TPAI, PHFK…LFAV, FFGP…LAHI, ALGF…AVVL, WFGV…ALLL, ALIP…QALI, IYMP…VVMF, AYGI…FFVI, PLAL…AFFA, and LFQG…LMMT.

The protein belongs to the HAK/KUP transporter (TC 2.A.72) family.

The protein resides in the cell inner membrane. It carries out the reaction K(+)(in) + H(+)(in) = K(+)(out) + H(+)(out). Functionally, transport of potassium into the cell. Likely operates as a K(+):H(+) symporter. The sequence is that of Probable potassium transport system protein Kup from Verminephrobacter eiseniae (strain EF01-2).